A 542-amino-acid chain; its full sequence is E3 ubiquitin-protein ligase RNF217 (542 aa).

2 disordered regions span residues 1–140 (MGEE…TRVG) and 176–216 (APAS…TDSL). Positions 37-50 (SARAPPLRAASAEP) are enriched in low complexity. Acidic residues predominate over residues 122 to 132 (DEQQEAPPGEE). Residues 185-196 (PASPPGAPPVLN) are compositionally biased toward pro residues. Residues 197-213 (PPSTRSSFPSPRLSLPT) are compositionally biased toward low complexity. Positions 259 to 478 (MVLMCRVCLE…LSIFGCKYRY (220 aa)) are TRIAD supradomain. Residues Cys263, Cys266, Cys283, Cys286, Cys383, Cys386, His391, Cys396, Cys423, and Cys426 each contribute to the Zn(2+) site. An RING-type 1 zinc finger spans residues 263–309 (CRVCLEDKPIKPLPCCKKAVCEECLKVYLSAQVQLGQVEIKCPITEC). The IBR-type zinc finger occupies 328-396 (IKYKYFLELG…HSPWHEGVNC (69 aa)). The RING-type 2; atypical zinc finger occupies 423–452 (CPKCKIHIQRTEGCDHMTCSQCNTNFCYRC). Cys436 is an active-site residue. Zn(2+) is bound by residues Cys441, Cys444, Cys449, Cys452, His465, and Cys474. A helical membrane pass occupies residues 503–523 (LIMVLGLALGAIAVVIGLFVF).

This sequence belongs to the RBR family. RNF217 subfamily. As to quaternary structure, interacts with HAX1. In terms of tissue distribution, mainly expressed in testis and skeletal muscle.

Its subcellular location is the membrane. The protein resides in the cytoplasm. It carries out the reaction [E2 ubiquitin-conjugating enzyme]-S-ubiquitinyl-L-cysteine + [acceptor protein]-L-lysine = [E2 ubiquitin-conjugating enzyme]-L-cysteine + [acceptor protein]-N(6)-ubiquitinyl-L-lysine.. Its pathway is protein modification; protein ubiquitination. In terms of biological role, E3 ubiquitin-protein ligase which accepts ubiquitin from E2 ubiquitin-conjugating enzymes in the form of a thioester and then directly transfers the ubiquitin to targeted substrates. Mediates the degradation of the iron exporter ferroportin/SLC40A1 and thus regulates iron homeostasis. In Homo sapiens (Human), this protein is E3 ubiquitin-protein ligase RNF217 (RNF217).